Reading from the N-terminus, the 68-residue chain is conotoxin S11.3 (68 aa).

An N-terminal signal peptide occupies residues 1-26 (MMFRLTSVSCFLLVIVCLNLFQVVLT). Disulfide bonds link C29–C43, C36–C48, C42–C52, and C47–C56. Position 60 is a tyrosine amide (Y60). The propeptide occupies 64 to 68 (ATFQE).

This sequence belongs to the conotoxin I2 superfamily. Expressed by the venom duct.

The protein resides in the secreted. The polypeptide is conotoxin S11.3 (Conus striatus (Striated cone)).